Reading from the N-terminus, the 269-residue chain is Photosystem I assembly factor PSA3, chloroplastic (269 aa).

Residues 1-37 (MGALPVAHSLALTAAFLPCRRPAAHGRCRRRRYRAVV) constitute a chloroplast transit peptide.

The protein resides in the plastid. Its subcellular location is the chloroplast thylakoid membrane. Nuclear genome-encoded factor required for the accumulation of photosystem I (PSI). Functions as a PSI biogenesis factor. Cooperates with PYG7 to promote the stable assembly of PSI in the thylakoid membrane. May target primarily the PsaC subunit. Does not seem to be required for the expression of chloroplast genes encoding PSI subunits. This Zea mays (Maize) protein is Photosystem I assembly factor PSA3, chloroplastic.